A 158-amino-acid polypeptide reads, in one-letter code: uncharacterized protein (158 aa).

2 consecutive transmembrane segments (helical) span residues 10–30 (LFFIFSGGLVFFFFEFFLNHF) and 40–60 (YITFYFIKNHPSLFLLFNFFL).

The protein localises to the membrane. This is an uncharacterized protein from Schizosaccharomyces pombe (strain 972 / ATCC 24843) (Fission yeast).